A 599-amino-acid polypeptide reads, in one-letter code: PR domain zinc finger protein 5 (599 aa).

The 117-residue stretch at 8–124 folds into the SET domain; sequence DRFALKSSRV…TDTELLIGYL (117 aa). 12 consecutive C2H2-type zinc fingers follow at residues 167-190, 199-221, 231-256, 264-286, 289-311, 317-339, 345-367, 373-395, 401-424, 430-452, 458-480, and 486-508; these read FACP…QSLH, FKCE…FEQH, FVCK…ENVH, LICS…RKIH, FDCQ…MITH, YNCE…KVIH, YQCK…KKTH, FQCD…LLIH, FKCH…QVVH, YRCE…KKTH, KVCP…IRSH, and YQCP…IRTH. The C2H2-type 13; degenerate zinc-finger motif lies at 514–536; sequence YQCSECSKAFSQKRGLDEHKRTH. C2H2-type zinc fingers lie at residues 542–564 and 571–594; these read FQCD…KMTH and AECH…DNIH.

This sequence belongs to the class V-like SAM-binding methyltransferase superfamily. As to quaternary structure, interacts with EHMT2/G9A, GFI1 and HDAC1.

The protein resides in the nucleus. Functionally, sequence-specific DNA-binding transcription factor. Represses transcription at least in part by recruitment of the histone methyltransferase EHMT2/G9A and histone deacetylases such as HDAC1. Regulates hematopoiesis-associated protein-coding and microRNA (miRNA) genes. May regulate the expression of proteins involved in extracellular matrix development and maintenance, connective tissue components and molecules regulating cell migration and adhesion. May cause G2/M arrest and apoptosis in cancer cells. The polypeptide is PR domain zinc finger protein 5 (Prdm5) (Mus musculus (Mouse)).